We begin with the raw amino-acid sequence, 102 residues long: Citrate lyase acyl carrier protein (102 aa).

Ser-14 carries the O-(phosphoribosyl dephospho-coenzyme A)serine modification.

This sequence belongs to the CitD family. As to quaternary structure, oligomer with a subunit composition of (alpha,beta,gamma)6.

The protein resides in the cytoplasm. Functionally, covalent carrier of the coenzyme of citrate lyase. The chain is Citrate lyase acyl carrier protein from Streptococcus mutans serotype c (strain ATCC 700610 / UA159).